The following is a 677-amino-acid chain: Methionine--tRNA ligase (677 aa).

The 'HIGH' region motif lies at 15 to 25; it reads PYANGSIHLGH. 4 residues coordinate Zn(2+): cysteine 146, cysteine 149, cysteine 159, and cysteine 162. A 'KMSKS' region motif is present at residues 333-337; the sequence is KMSKS. ATP is bound at residue lysine 336. The tRNA-binding domain occupies 575–677; the sequence is DFAKIDLRVA…DGAKPGQQVK (103 aa).

This sequence belongs to the class-I aminoacyl-tRNA synthetase family. MetG type 1 subfamily. Homodimer. Zn(2+) is required as a cofactor.

The protein resides in the cytoplasm. It catalyses the reaction tRNA(Met) + L-methionine + ATP = L-methionyl-tRNA(Met) + AMP + diphosphate. Its function is as follows. Is required not only for elongation of protein synthesis but also for the initiation of all mRNA translation through initiator tRNA(fMet) aminoacylation. The protein is Methionine--tRNA ligase of Salmonella agona (strain SL483).